The following is a 105-amino-acid chain: Urease subunit beta (105 aa).

Belongs to the urease beta subunit family. As to quaternary structure, heterotrimer of UreA (gamma), UreB (beta) and UreC (alpha) subunits. Three heterotrimers associate to form the active enzyme.

The protein localises to the cytoplasm. It carries out the reaction urea + 2 H2O + H(+) = hydrogencarbonate + 2 NH4(+). Its pathway is nitrogen metabolism; urea degradation; CO(2) and NH(3) from urea (urease route): step 1/1. This Marinobacter nauticus (strain ATCC 700491 / DSM 11845 / VT8) (Marinobacter aquaeolei) protein is Urease subunit beta.